The following is a 574-amino-acid chain: MYND-type zinc finger protein C31F10.10c (574 aa).

Disordered regions lie at residues Asp-207 to Arg-253 and Met-283 to Asp-307. 2 stretches are compositionally biased toward polar residues: residues Ile-243–Arg-253 and Met-283–Thr-301. Residues Asn-482–Cys-523 form an MYND-type; degenerate zinc finger. Residues Cys-498, Cys-501, His-519, and Cys-523 each contribute to the Zn(2+) site. Residues Lys-534 to Leu-574 are disordered. Positions Ser-542 to Val-556 are enriched in low complexity. The span at Glu-562–Leu-574 shows a compositional bias: polar residues.

Belongs to the MUB1/samB family.

Its subcellular location is the nucleus. It is found in the cytoplasm. The protein localises to the cytoskeleton. The protein resides in the microtubule organizing center. It localises to the spindle pole body. This Schizosaccharomyces pombe (strain 972 / ATCC 24843) (Fission yeast) protein is MYND-type zinc finger protein C31F10.10c.